We begin with the raw amino-acid sequence, 540 residues long: Flavin-dependent halogenase ptaM (540 aa).

Residues 1–21 (MSVPAQTSVLIVGGGPAGSYA) form the signal peptide. FAD-binding residues include Gly-14, Ala-17, and Glu-47. 4 N-linked (GlcNAc...) asparagine glycosylation sites follow: Asn-159, Asn-192, Asn-204, and Asn-243. Residues Ser-330 and Gly-331 each coordinate chloride. 3 N-linked (GlcNAc...) asparagine glycosylation sites follow: Asn-480, Asn-491, and Asn-523.

Belongs to the flavin-dependent halogenase family.

The protein operates within secondary metabolite biosynthesis. Functionally, flavin-dependent halogenase; part of the gene cluster that mediates the biosynthesis of pestheic acid, a diphenyl ether which is a biosynthetic precursor of the unique chloropupukeananes. The biosynthesis initiates from condensation of acetate and malonate units catalyzed by the non-reducing PKS ptaA. As the ptaA protein is TE/CLC domain-deficient, hydrolysis and Claisen cyclization of the polyketide could be catalyzed by ptaB containing a beta-lactamase domain. The ptaB protein might hydrolyze the thioester bond between the ACP of ptaA and the intermediate to release atrochrysone carboxylic acid, which is spontaneously dehydrated to form endocrocin anthrone. Endocrocin anthrone is then converted to endocrocin, catalyzed by the anthrone oxygenase ptaC. Spontaneous decarboxylation of endocrocin occurs to generate emodin. An O-methyltransferase (ptaH or ptaI) could methylate emodin to form physcion. PtaJ could then catalyze the oxidative cleavage of physcion, and rotation of the intermediate could then afford desmethylisosulochrin. PtaF, a putative NADH-dependent oxidoreductase, might also participate in the oxidative cleavage step. Desmethylisosulochrin is then transformed by another O-methyltransferase (ptaH or ptaI) to form isosulochrin. Chlorination of isosulochrin by ptaM in the cyclohexadienone B ring then produces chloroisosulochrin. PtaE is responsible for the oxidative coupling reactions of both benzophenones isosulochrin and chloroisosulochrin to RES-1214-1 and pestheic acid respectively, regardless of chlorination. This chain is Flavin-dependent halogenase ptaM, found in Pestalotiopsis fici (strain W106-1 / CGMCC3.15140).